Reading from the N-terminus, the 417-residue chain is Serine--tRNA ligase (417 aa).

Residue Thr-226–Glu-228 coordinates L-serine. ATP-binding positions include Arg-257–Glu-259 and Val-273. Residue Glu-280 participates in L-serine binding. Glu-344 to Ser-347 is an ATP binding site. Thr-379 contacts L-serine.

Belongs to the class-II aminoacyl-tRNA synthetase family. Type-1 seryl-tRNA synthetase subfamily. In terms of assembly, homodimer. The tRNA molecule binds across the dimer.

It localises to the cytoplasm. The catalysed reaction is tRNA(Ser) + L-serine + ATP = L-seryl-tRNA(Ser) + AMP + diphosphate + H(+). The enzyme catalyses tRNA(Sec) + L-serine + ATP = L-seryl-tRNA(Sec) + AMP + diphosphate + H(+). It functions in the pathway aminoacyl-tRNA biosynthesis; selenocysteinyl-tRNA(Sec) biosynthesis; L-seryl-tRNA(Sec) from L-serine and tRNA(Sec): step 1/1. Catalyzes the attachment of serine to tRNA(Ser). Is also able to aminoacylate tRNA(Sec) with serine, to form the misacylated tRNA L-seryl-tRNA(Sec), which will be further converted into selenocysteinyl-tRNA(Sec). The polypeptide is Serine--tRNA ligase (Tropheryma whipplei (strain Twist) (Whipple's bacillus)).